Reading from the N-terminus, the 604-residue chain is Elongation factor 4 (604 aa).

In terms of domain architecture, tr-type G spans 7–189 (SRLRNFCIIA…AVVDRIPPPA (183 aa)). GTP contacts are provided by residues 19 to 24 (DHGKST) and 136 to 139 (NKID).

Belongs to the TRAFAC class translation factor GTPase superfamily. Classic translation factor GTPase family. LepA subfamily.

The protein resides in the cell inner membrane. It carries out the reaction GTP + H2O = GDP + phosphate + H(+). Functionally, required for accurate and efficient protein synthesis under certain stress conditions. May act as a fidelity factor of the translation reaction, by catalyzing a one-codon backward translocation of tRNAs on improperly translocated ribosomes. Back-translocation proceeds from a post-translocation (POST) complex to a pre-translocation (PRE) complex, thus giving elongation factor G a second chance to translocate the tRNAs correctly. Binds to ribosomes in a GTP-dependent manner. This is Elongation factor 4 from Prochlorococcus marinus (strain MIT 9313).